The primary structure comprises 477 residues: Glycogen synthase (477 aa).

Lys-15 contacts ADP-alpha-D-glucose.

Belongs to the glycosyltransferase 1 family. Bacterial/plant glycogen synthase subfamily.

It carries out the reaction [(1-&gt;4)-alpha-D-glucosyl](n) + ADP-alpha-D-glucose = [(1-&gt;4)-alpha-D-glucosyl](n+1) + ADP + H(+). It participates in glycan biosynthesis; glycogen biosynthesis. Functionally, synthesizes alpha-1,4-glucan chains using ADP-glucose. In Citrobacter koseri (strain ATCC BAA-895 / CDC 4225-83 / SGSC4696), this protein is Glycogen synthase.